The primary structure comprises 199 residues: NAD(P)H dehydrogenase (quinone) (199 aa).

The 187-residue stretch at 4–190 (VLVLYYSMYG…AIARFQGKHV (187 aa)) folds into the Flavodoxin-like domain. Residues 10-15 (SMYGHI) and 79-81 (TRF) contribute to the FMN site. An NAD(+)-binding site is contributed by Tyr12. Position 99 (Trp99) interacts with substrate. FMN-binding positions include 114–119 (STGTGG) and His134.

It belongs to the WrbA family. The cofactor is FMN.

It carries out the reaction a quinone + NADH + H(+) = a quinol + NAD(+). The enzyme catalyses a quinone + NADPH + H(+) = a quinol + NADP(+). This is NAD(P)H dehydrogenase (quinone) from Marinobacter nauticus (strain ATCC 700491 / DSM 11845 / VT8) (Marinobacter aquaeolei).